Here is a 370-residue protein sequence, read N- to C-terminus: MVYETGNETVDDAVQRALDGERLDRTDGLALLAQPVDELAAGADLLRRHFSDGTVDACSIVNAKAGNCAEDCGFCAQSAHFDTGIDTYGFLDPEDILDAAKRAEADGAQRFGIVVAEKGVSKEKRPDEWDDVIRAIRLVRDETDVEVDASLGVLTEEEAEILAAEGLNHYNHNIETSRRYFSEIVNTHSFDDRLKTLHRAKAAGMDLCAGVILGMGETPADRVDAAIELQEVGVSSLPVNILNPVEGTPIGDREAATISRTELIKTIAVYRFLHPEARVRLTGGREVNLDPDEQHLPFEAGADGLLTGDYLTTDGQTPADDIEIIERAGLEPNREANTFDPESVKARHRSPAAETASNANRTNATTETDD.

The region spanning 50 to 276 (FSDGTVDACS…IAVYRFLHPE (227 aa)) is the Radical SAM core domain. Residues C68, C72, and C75 each coordinate [4Fe-4S] cluster. Residues C208 and R280 each coordinate [2Fe-2S] cluster. A disordered region spans residues 328-370 (AGLEPNREANTFDPESVKARHRSPAAETASNANRTNATTETDD). Residues 352–370 (AAETASNANRTNATTETDD) are compositionally biased toward low complexity.

It belongs to the radical SAM superfamily. Biotin synthase family. As to quaternary structure, homodimer. Requires [4Fe-4S] cluster as cofactor. [2Fe-2S] cluster is required as a cofactor.

It carries out the reaction (4R,5S)-dethiobiotin + (sulfur carrier)-SH + 2 reduced [2Fe-2S]-[ferredoxin] + 2 S-adenosyl-L-methionine = (sulfur carrier)-H + biotin + 2 5'-deoxyadenosine + 2 L-methionine + 2 oxidized [2Fe-2S]-[ferredoxin]. It functions in the pathway cofactor biosynthesis; biotin biosynthesis; biotin from 7,8-diaminononanoate: step 2/2. In terms of biological role, catalyzes the conversion of dethiobiotin (DTB) to biotin by the insertion of a sulfur atom into dethiobiotin via a radical-based mechanism. This chain is Biotin synthase, found in Natronomonas pharaonis (strain ATCC 35678 / DSM 2160 / CIP 103997 / JCM 8858 / NBRC 14720 / NCIMB 2260 / Gabara) (Halobacterium pharaonis).